The following is a 270-amino-acid chain: Formamidopyrimidine-DNA glycosylase (270 aa).

The active-site Schiff-base intermediate with DNA is P2. Catalysis depends on E3, which acts as the Proton donor. K58 acts as the Proton donor; for beta-elimination activity in catalysis. The DNA site is built by H91, R109, and R151. Residues 236–270 form an FPG-type zinc finger; sequence MVYNRQEEPCRLCGTPIRQIRQGQRSTYYCPLCQP. R260 acts as the Proton donor; for delta-elimination activity in catalysis.

Belongs to the FPG family. In terms of assembly, monomer. It depends on Zn(2+) as a cofactor.

The catalysed reaction is Hydrolysis of DNA containing ring-opened 7-methylguanine residues, releasing 2,6-diamino-4-hydroxy-5-(N-methyl)formamidopyrimidine.. It carries out the reaction 2'-deoxyribonucleotide-(2'-deoxyribose 5'-phosphate)-2'-deoxyribonucleotide-DNA = a 3'-end 2'-deoxyribonucleotide-(2,3-dehydro-2,3-deoxyribose 5'-phosphate)-DNA + a 5'-end 5'-phospho-2'-deoxyribonucleoside-DNA + H(+). Involved in base excision repair of DNA damaged by oxidation or by mutagenic agents. Acts as a DNA glycosylase that recognizes and removes damaged bases. Has a preference for oxidized purines, such as 7,8-dihydro-8-oxoguanine (8-oxoG). Has AP (apurinic/apyrimidinic) lyase activity and introduces nicks in the DNA strand. Cleaves the DNA backbone by beta-delta elimination to generate a single-strand break at the site of the removed base with both 3'- and 5'-phosphates. This chain is Formamidopyrimidine-DNA glycosylase, found in Chromobacterium violaceum (strain ATCC 12472 / DSM 30191 / JCM 1249 / CCUG 213 / NBRC 12614 / NCIMB 9131 / NCTC 9757 / MK).